Reading from the N-terminus, the 394-residue chain is Phosphoglycerate kinase (394 aa).

Substrate-binding positions include 21–23, R36, 59–62, R118, and R151; these read DFN and HFGR. ATP contacts are provided by residues K201, E323, and 349-352; that span reads GGDS.

It belongs to the phosphoglycerate kinase family. Monomer.

It localises to the cytoplasm. It catalyses the reaction (2R)-3-phosphoglycerate + ATP = (2R)-3-phospho-glyceroyl phosphate + ADP. Its pathway is carbohydrate degradation; glycolysis; pyruvate from D-glyceraldehyde 3-phosphate: step 2/5. The chain is Phosphoglycerate kinase from Brevibacillus brevis (strain 47 / JCM 6285 / NBRC 100599).